The primary structure comprises 174 residues: Gamma-crystallin M3 (174 aa).

Beta/gamma crystallin 'Greek key' domains lie at 2–40 (GKII…RVES) and 41–82 (GCFV…RMVP). Positions 83 to 87 (QYRGP) are connecting peptide. 2 Beta/gamma crystallin 'Greek key' domains span residues 88–128 (YRMR…HVMD) and 129–171 (GHWL…RRIM).

Belongs to the beta/gamma-crystallin family. As to quaternary structure, monomer.

Crystallins are the dominant structural components of the vertebrate eye lens. The sequence is that of Gamma-crystallin M3 from Cyprinus carpio (Common carp).